We begin with the raw amino-acid sequence, 828 residues long: Periplasmic nitrate reductase (828 aa).

The segment at residues 1–31 (MKLSRRSFMKANAVAAAAAAAGLSVPGVARA) is a signal peptide (tat-type signal). A 4Fe-4S Mo/W bis-MGD-type domain is found at 39–95 (IKWDKAPCRFCGTGCGVLVGTQQGRVVACQGDPDAPVNRGLNCIKGYFLPKIMYGKD). The [4Fe-4S] cluster site is built by C46, C49, C53, and C81. Residues K83, Q150, N175, C179, 212–219 (WGANMAEM), 243–247 (STYQH), 262–264 (QSD), M372, Q376, N482, 508–509 (SD), K531, D558, and 718–727 (TGRVLEHWHT) contribute to the Mo-bis(molybdopterin guanine dinucleotide) site. F794 serves as a coordination point for substrate. 2 residues coordinate Mo-bis(molybdopterin guanine dinucleotide): N802 and K819.

The protein belongs to the prokaryotic molybdopterin-containing oxidoreductase family. NasA/NapA/NarB subfamily. Component of the periplasmic nitrate reductase NapAB complex composed of NapA and NapB. It depends on [4Fe-4S] cluster as a cofactor. Requires Mo-bis(molybdopterin guanine dinucleotide) as cofactor. Predicted to be exported by the Tat system. The position of the signal peptide cleavage has not been experimentally proven.

It is found in the periplasm. It carries out the reaction 2 Fe(II)-[cytochrome] + nitrate + 2 H(+) = 2 Fe(III)-[cytochrome] + nitrite + H2O. Catalytic subunit of the periplasmic nitrate reductase complex NapAB. Receives electrons from NapB and catalyzes the reduction of nitrate to nitrite. This Escherichia coli O9:H4 (strain HS) protein is Periplasmic nitrate reductase.